A 151-amino-acid polypeptide reads, in one-letter code: Large ribosomal subunit protein bL9 (151 aa).

This sequence belongs to the bacterial ribosomal protein bL9 family.

Functionally, binds to the 23S rRNA. The sequence is that of Large ribosomal subunit protein bL9 from Lacticaseibacillus casei (strain BL23) (Lactobacillus casei).